The primary structure comprises 256 residues: Probable hydroxyacylglutathione hydrolase SPCC13B11.03c (256 aa).

Residues His-63, His-65, Asp-67, His-68, His-118, and Asp-139 each coordinate Zn(2+). Residues 148-150 (RFF), 178-180 (HEY), and 250-253 (RTLK) contribute to the substrate site. His-178 is a binding site for Zn(2+).

It belongs to the metallo-beta-lactamase superfamily. Glyoxalase II family. Zn(2+) is required as a cofactor.

Its subcellular location is the cytoplasm. The protein localises to the nucleus. The enzyme catalyses an S-(2-hydroxyacyl)glutathione + H2O = a 2-hydroxy carboxylate + glutathione + H(+). It catalyses the reaction (R)-S-lactoylglutathione + H2O = (R)-lactate + glutathione + H(+). Its pathway is secondary metabolite metabolism; methylglyoxal degradation; (R)-lactate from methylglyoxal: step 2/2. Its function is as follows. Thiolesterase that catalyzes the hydrolysis of S-D-lactoylglutathione to form glutathione and D-lactic acid. Involved in the metabolism of methylglyoxal, a toxic compound for yeast proliferation, by converting methylglyoxal to lactate via S-D-lactoylglutathione by sequential enzyme reactions catalyzed by glyoxalase I and glyoxalase II. The chain is Probable hydroxyacylglutathione hydrolase SPCC13B11.03c from Schizosaccharomyces pombe (strain 972 / ATCC 24843) (Fission yeast).